We begin with the raw amino-acid sequence, 400 residues long: MGGWSAKPRKGMGTNLSVPNPLGFFPDHQLDPAFGANSNNPDWDFNPNKDHWPEANQVGVGAFGPGFTPPHGGLLGWSSQAQGTLHTVPAVPPPASTNRQTGRQPTPISPPLRDSHPQAMQWNSTAFQQALQDPRVRGLFFPAGGSSSGTVNPAPNIASHISSISSRTGDPALNMENITSGFLGPLLVLQAGFFLLTRILTIPQSLDSWWTSLNFLGGSPVCLGQNSQSPTSNHSPTSCPPICPGYRWMCLRRFIIFLFILLLCLIFLLVLLDYQGMLPVCPLIPGSTTTSTGPCKTCTTPAQGNSMFPSCCCTKPTDGNCTCIPIPSSWAFAKYLWEWASVRFSWLSLLVPFVQWFVGLSPTVWLSVIWMMWYWGPSLYNILSPFIPLLPIFFCLWVYI.

N-acetylmethionine is present on methionine 1. Positions 1–20 (MGGWSAKPRKGMGTNLSVPN) are disordered. The N-myristoyl glycine; by host moiety is linked to residue glycine 2. Residues 2–119 (GGWSAKPRKG…PPLRDSHPQA (118 aa)) form a pre-S1 region. Positions 2 to 174 (GGWSAKPRKG…SSRTGDPALN (173 aa)) are pre-S. Topologically, residues 2-181 (GGWSAKPRKG…ALNMENITSG (180 aa)) are virion surface; in external conformation. At 2–253 (GGWSAKPRKG…PGYRWMCLRR (252 aa)) the chain is on the intravirion; in internal conformation side. N-linked (GlcNAc...) asparagine glycosylation occurs at tryptophan 4. The tract at residues 120–174 (MQWNSTAFQQALQDPRVRGLFFPAGGSSSGTVNPAPNIASHISSISSRTGDPALN) is pre-S2. Residues 182–202 (FLGPLLVLQAGFFLLTRILTI) traverse the membrane as a helical segment. Topologically, residues 203-253 (PQSLDSWWTSLNFLGGSPVCLGQNSQSPTSNHSPTSCPPICPGYRWMCLRR) are intravirion; in external conformation. A helical transmembrane segment spans residues 254–274 (FIIFLFILLLCLIFLLVLLDY). The Virion surface portion of the chain corresponds to 275 to 348 (QGMLPVCPLI…WASVRFSWLS (74 aa)). Asparagine 320 carries N-linked (GlcNAc...) asparagine; by host glycosylation. A helical transmembrane segment spans residues 349–369 (LLVPFVQWFVGLSPTVWLSVI). The Intravirion portion of the chain corresponds to 370-375 (WMMWYW). A helical membrane pass occupies residues 376–398 (GPSLYNILSPFIPLLPIFFCLWV). At 399–400 (YI) the chain is on the virion surface side.

It belongs to the orthohepadnavirus major surface antigen family. In terms of assembly, in its internal form (Li-HBsAg), interacts with the capsid protein and with the isoform S. Interacts with host chaperone CANX. Associates with host chaperone CANX through its pre-S2 N glycan; this association may be essential for isoform M proper secretion. As to quaternary structure, interacts with isoform L. Interacts with the antigens of satellite virus HDV (HDVAgs); this interaction is required for encapsidation of HDV genomic RNA. Isoform M is N-terminally acetylated by host at a ratio of 90%, and N-glycosylated by host at the pre-S2 region. In terms of processing, myristoylated.

Its subcellular location is the virion membrane. In terms of biological role, the large envelope protein exists in two topological conformations, one which is termed 'external' or Le-HBsAg and the other 'internal' or Li-HBsAg. In its external conformation the protein attaches the virus to cell receptors and thereby initiating infection. This interaction determines the species specificity and liver tropism. This attachment induces virion internalization predominantly through caveolin-mediated endocytosis. The large envelope protein also assures fusion between virion membrane and endosomal membrane. In its internal conformation the protein plays a role in virion morphogenesis and mediates the contact with the nucleocapsid like a matrix protein. Functionally, the middle envelope protein plays an important role in the budding of the virion. It is involved in the induction of budding in a nucleocapsid independent way. In this process the majority of envelope proteins bud to form subviral lipoprotein particles of 22 nm of diameter that do not contain a nucleocapsid. The chain is Large envelope protein from Hepatitis B virus genotype A1 subtype adw2 (isolate Southern-Africa/Cai) (HBV-A).